The chain runs to 313 residues: D-alanine--D-alanine ligase (313 aa).

Positions 108–308 (KLVWQQTGVP…YSELVVKVLS (201 aa)) constitute an ATP-grasp domain. Residue 138–193 (VAKLGLPLFVKPASEGSSVAVLKVKTADALPAALSEAATHDKIVIVEKSIEGGGEY) participates in ATP binding. The Mg(2+) site is built by D262, E275, and N277.

Belongs to the D-alanine--D-alanine ligase family. It depends on Mg(2+) as a cofactor. Mn(2+) is required as a cofactor.

The protein resides in the cytoplasm. It carries out the reaction 2 D-alanine + ATP = D-alanyl-D-alanine + ADP + phosphate + H(+). Its pathway is cell wall biogenesis; peptidoglycan biosynthesis. Cell wall formation. The protein is D-alanine--D-alanine ligase of Burkholderia vietnamiensis (strain G4 / LMG 22486) (Burkholderia cepacia (strain R1808)).